We begin with the raw amino-acid sequence, 328 residues long: Interleukin-12 subunit beta (328 aa).

Positions 1–22 are cleaved as a signal peptide; it reads MCHQQLVISWFSLVFLASPLMA. The 78-residue stretch at 29–106 folds into the Ig-like C2-type domain; it reads DVYVVELDWY…LSHSLLLLHK (78 aa). An intrachain disulfide couples Cys-50 to Cys-90. Asn-125, Asn-135, and Asn-222 each carry an N-linked (GlcNAc...) asparagine glycan. Residues 237 to 328 enclose the Fibronectin type-III domain; sequence PPKNLQLKPL…WSEWASVPCS (92 aa).

It belongs to the IL-12B family. As to quaternary structure, heterodimer with IL12A; disulfide-linked. The heterodimer is known as interleukin IL-12. Heterodimer with IL23A; disulfide-linked. The heterodimer is known as interleukin IL-23. Also secreted as a monomer. Interacts with NBR1; this interaction promotes IL-12 secretion.

It is found in the secreted. Cytokine that can act as a growth factor for activated T and NK cells, enhance the lytic activity of NK/lymphokine-activated killer cells, and stimulate the production of IFN-gamma by resting PBMC. Its function is as follows. Associates with IL23A to form the IL-23 interleukin, a heterodimeric cytokine which functions in innate and adaptive immunity. IL-23 may constitute with IL-17 an acute response to infection in peripheral tissues. IL-23 binds to a heterodimeric receptor complex composed of IL12RB1 and IL23R, activates the Jak-Stat signaling cascade, stimulates memory rather than naive T-cells and promotes production of pro-inflammatory cytokines. IL-23 induces autoimmune inflammation and thus may be responsible for autoimmune inflammatory diseases and may be important for tumorigenesis. In Macaca mulatta (Rhesus macaque), this protein is Interleukin-12 subunit beta (IL12B).